We begin with the raw amino-acid sequence, 63 residues long: Hypoxia-inducible lipid droplet-associated protein (63 aa).

The segment at 1–37 (MKHVLNLYLLGVVLTLLSIFVRVMESLEGLLESPSPG) is required for targeting to lipid droplets. Residues 7-23 (LYLLGVVLTLLSIFVRV) traverse the membrane as a helical segment. The disordered stretch occupies residues 31–63 (LESPSPGTSWTTRSQLANTEPTKGLPDHPSRSM). Positions 35-51 (SPGTSWTTRSQLANTEP) are enriched in polar residues. S44 bears the Phosphoserine mark.

Highly expressed in renal cell carcinoma cells but barely detectable in adjacent normal kidney tissue. Detected in some cervical and endometrial cancers. Expression also detected in fetal kidney with little or no expression observed in normal adult heart, liver, lung, pancreas, prostate or spinal cord (at protein level).

Its subcellular location is the lipid droplet. The protein localises to the secreted. The protein resides in the membrane. In terms of biological role, increases intracellular lipid accumulation. Stimulates expression of cytokines including IL6, MIF and VEGFA. Enhances cell growth and proliferation. The chain is Hypoxia-inducible lipid droplet-associated protein (HILPDA) from Homo sapiens (Human).